Consider the following 179-residue polypeptide: MARLRKHYDTVVKPALQKEFNYANPMQVPKLQKIVINMGVGEAAQDSKKIESALAELTLISGQKPVSTKAKMSIAQFKLREGQVVGCKVTLRAERMYEFLDRLINIALPRVRDFRGVPGKSFDGRGNYSLGLKEQIVFPEIDYDKVETIRGMDIIFVTTAKSNEEAKALLKGFDMPFVA.

Belongs to the universal ribosomal protein uL5 family. Part of the 50S ribosomal subunit; part of the 5S rRNA/L5/L18/L25 subcomplex. Contacts the 5S rRNA and the P site tRNA. Forms a bridge to the 30S subunit in the 70S ribosome.

In terms of biological role, this is one of the proteins that bind and probably mediate the attachment of the 5S RNA into the large ribosomal subunit, where it forms part of the central protuberance. In the 70S ribosome it contacts protein S13 of the 30S subunit (bridge B1b), connecting the 2 subunits; this bridge is implicated in subunit movement. Contacts the P site tRNA; the 5S rRNA and some of its associated proteins might help stabilize positioning of ribosome-bound tRNAs. The protein is Large ribosomal subunit protein uL5 of Paramagnetospirillum magneticum (strain ATCC 700264 / AMB-1) (Magnetospirillum magneticum).